The primary structure comprises 551 residues: Protein PLASTID TRANSCRIPTIONALLY ACTIVE 12, chloroplastic (551 aa).

The transit peptide at M1–S47 directs the protein to the chloroplast. 2 disordered regions span residues S76 to S161 and H463 to S529. A compositionally biased stretch (low complexity) spans R109–V119. Composition is skewed to acidic residues over residues E467 to A476 and S485 to D498. Residues R505–A516 are compositionally biased toward polar residues. Basic and acidic residues predominate over residues N518–S529.

In terms of assembly, component of the plastid-encoded plastid RNA polymerase (PEP) complex.

The protein resides in the plastid. The protein localises to the chloroplast. In terms of biological role, required for the activity of the plastid-encoded RNA polymerase (PEP) and full expression of genes transcribed by PEP. Required for the proper build-up and formation of the PEP-complex. Binds single-stranded (ss) DNA and RNA, but not double-stranded (ds) DNA. In Oryza sativa subsp. japonica (Rice), this protein is Protein PLASTID TRANSCRIPTIONALLY ACTIVE 12, chloroplastic.